The following is a 42-amino-acid chain: Snaclec lebecetin subunit alpha (42 aa).

Residues 1-42 (DQDCLPGWSSHEGHCYKVFNLDKTWEDAEKFCTEQPSNGHLV) enclose the C-type lectin domain. Residues Cys4 and Cys15 are joined by a disulfide bond.

As to quaternary structure, heterodimer of subunits alpha and beta; disulfide-linked. It depends on Ca(2+) as a cofactor. Post-translationally, glycosylated. Expressed by the venom gland.

The protein resides in the secreted. Binds to the platelet GPIb/IX/V receptor system and inhibits ristocetin-induced platelet aggregation in human platelet-rich plasma. Strongly inhibits platelet aggregation induced by ADP, calcium ionophore, thrombin and collagen. Does not inhibit U46619-induced platelet aggregation. The chain is Snaclec lebecetin subunit alpha from Macrovipera lebetinus (Levantine viper).